A 292-amino-acid chain; its full sequence is MNKYTINDITRASGGFAMLAVDQREAMRMMFAAAGAPAPVADSVLTDFKVNAAKTLSPYASAILVDQQFCYRQVVEQNAIAKSCAMIVAADEFIPGNGIPVDSVVIDRKINPLQIKQDGGKALKLLVLWRSDEDAQQRLDMVKEFNELCHSHGLVSIIEPVVRPPRRGDKFDREQAIIDAAKELGDSGADLYKVEMPLYGKGPQQELLSASQRLNDHINMPWVILSSGVDEKLFPRAVRVAMTAGASGFLAGRAVWASVVGLPDNELMLRDVCAPKLQQLGDIVDEMMAKRR.

Catalysis depends on K193, which acts as the Schiff-base intermediate with substrate.

Belongs to the aldolase LacD family. As to quaternary structure, homotetramer.

It carries out the reaction 6-deoxy-6-sulfo-D-fructose 1-phosphate = (2S)-3-sulfolactaldehyde + dihydroxyacetone phosphate. Its function is as follows. Cleaves 6-deoxy-6-sulfo-D-fructose 1-phosphate (SFP) to form dihydroxyacetone phosphate (DHAP) and 3-sulfolactaldehyde (SLA). The sequence is that of Sulfofructosephosphate aldolase (yihT) from Escherichia coli O157:H7.